We begin with the raw amino-acid sequence, 286 residues long: 4-hydroxy-3-methylbut-2-enyl diphosphate reductase (286 aa).

Residue C12 coordinates [4Fe-4S] cluster. 2 residues coordinate (2E)-4-hydroxy-3-methylbut-2-enyl diphosphate: H46 and H79. H46 and H79 together coordinate dimethylallyl diphosphate. Isopentenyl diphosphate contacts are provided by H46 and H79. Residue C101 participates in [4Fe-4S] cluster binding. A (2E)-4-hydroxy-3-methylbut-2-enyl diphosphate-binding site is contributed by H129. Dimethylallyl diphosphate is bound at residue H129. H129 contributes to the isopentenyl diphosphate binding site. E131 serves as the catalytic Proton donor. T169 contacts (2E)-4-hydroxy-3-methylbut-2-enyl diphosphate. A [4Fe-4S] cluster-binding site is contributed by C198. (2E)-4-hydroxy-3-methylbut-2-enyl diphosphate contacts are provided by S226, N228, and S270. S226, N228, and S270 together coordinate dimethylallyl diphosphate. Isopentenyl diphosphate contacts are provided by S226, N228, and S270.

This sequence belongs to the IspH family. The cofactor is [4Fe-4S] cluster.

It carries out the reaction isopentenyl diphosphate + 2 oxidized [2Fe-2S]-[ferredoxin] + H2O = (2E)-4-hydroxy-3-methylbut-2-enyl diphosphate + 2 reduced [2Fe-2S]-[ferredoxin] + 2 H(+). It catalyses the reaction dimethylallyl diphosphate + 2 oxidized [2Fe-2S]-[ferredoxin] + H2O = (2E)-4-hydroxy-3-methylbut-2-enyl diphosphate + 2 reduced [2Fe-2S]-[ferredoxin] + 2 H(+). It participates in isoprenoid biosynthesis; dimethylallyl diphosphate biosynthesis; dimethylallyl diphosphate from (2E)-4-hydroxy-3-methylbutenyl diphosphate: step 1/1. Its pathway is isoprenoid biosynthesis; isopentenyl diphosphate biosynthesis via DXP pathway; isopentenyl diphosphate from 1-deoxy-D-xylulose 5-phosphate: step 6/6. Its function is as follows. Catalyzes the conversion of 1-hydroxy-2-methyl-2-(E)-butenyl 4-diphosphate (HMBPP) into a mixture of isopentenyl diphosphate (IPP) and dimethylallyl diphosphate (DMAPP). Acts in the terminal step of the DOXP/MEP pathway for isoprenoid precursor biosynthesis. The sequence is that of 4-hydroxy-3-methylbut-2-enyl diphosphate reductase from Solidesulfovibrio magneticus (strain ATCC 700980 / DSM 13731 / RS-1) (Desulfovibrio magneticus).